Here is a 2156-residue protein sequence, read N- to C-terminus: Probable capsid protein 3 (2156 aa).

The interval 1319–1345 (NKSNKSNKSNESDKSSESDKSSESSNH) is disordered. The span at 1326–1345 (KSNESDKSSESDKSSESSNH) shows a compositional bias: basic and acidic residues.

This sequence belongs to the NCLDV major capsid protein family.

It localises to the virion. The sequence is that of Probable capsid protein 3 from Acanthamoeba polyphaga mimivirus (APMV).